A 268-amino-acid polypeptide reads, in one-letter code: Ribosomal RNA small subunit methyltransferase A (268 aa).

S-adenosyl-L-methionine contacts are provided by asparagine 11, leucine 13, glycine 37, glutamate 58, aspartate 86, and asparagine 104.

The protein belongs to the class I-like SAM-binding methyltransferase superfamily. rRNA adenine N(6)-methyltransferase family. RsmA subfamily.

It localises to the cytoplasm. The enzyme catalyses adenosine(1518)/adenosine(1519) in 16S rRNA + 4 S-adenosyl-L-methionine = N(6)-dimethyladenosine(1518)/N(6)-dimethyladenosine(1519) in 16S rRNA + 4 S-adenosyl-L-homocysteine + 4 H(+). In terms of biological role, specifically dimethylates two adjacent adenosines (A1518 and A1519) in the loop of a conserved hairpin near the 3'-end of 16S rRNA in the 30S particle. May play a critical role in biogenesis of 30S subunits. The chain is Ribosomal RNA small subunit methyltransferase A from Campylobacter fetus subsp. fetus (strain 82-40).